Here is a 65-residue protein sequence, read N- to C-terminus: Large ribosomal subunit protein bL31 (65 aa).

Positions 16, 18, 36, and 39 each coordinate Zn(2+).

Belongs to the bacterial ribosomal protein bL31 family. Type A subfamily. As to quaternary structure, part of the 50S ribosomal subunit. The cofactor is Zn(2+).

Functionally, binds the 23S rRNA. The polypeptide is Large ribosomal subunit protein bL31 (Carboxydothermus hydrogenoformans (strain ATCC BAA-161 / DSM 6008 / Z-2901)).